Reading from the N-terminus, the 65-residue chain is Bacteriocin amylovorin-L (65 aa).

The propeptide occupies 1–15; the sequence is MKQLNSEQLQNIIGG. Residues 39–59 traverse the membrane as a helical segment; it reads LGGVWGAVIGGVGGAAVCGLA.

In terms of assembly, active lactobin is composed of two different peptides, one which is lactobin A.

It localises to the secreted. The protein resides in the host cell membrane. In terms of biological role, this heat stable bacteriocin inhibits the growth of closely related Lactobacillus species. It may act as a pore-forming protein, creating a channel in the cell membrane. It kills Lactobacillus helveticus ATCC 15009, but displays no activity towards Listeria species. The protein is Bacteriocin amylovorin-L (amyL) of Lactobacillus amylovorus.